A 516-amino-acid chain; its full sequence is Cytochrome P450 monooxygenase asR2 (516 aa).

A helical membrane pass occupies residues 9 to 29 (LNSITFSLLVFLGFVGVSQLI). N-linked (GlcNAc...) asparagine glycosylation is found at N248 and N273. C461 lines the heme pocket.

The protein belongs to the cytochrome P450 family. Requires heme as cofactor.

It is found in the membrane. It participates in secondary metabolite biosynthesis; terpenoid biosynthesis. Its function is as follows. Cytochrome P450 monooxygenase; part of the gene cluster that mediates the biosynthesis of xenovulene A, an unusual meroterpenoid that has potent inhibitory effects on the human gamma-aminobutyrate A (GABAA) benzodiazepine receptor. The first step of xenovulene A biosynthesis is the biosynthesis of 3-methylorcinaldehyde performed by the non-reducing polyketide synthase aspks1. The salicylate hydroxylase asL1 then catalyzes the oxidative dearomatization of 3-methylorcinaldehyde to yield a dearomatized hydroxycyclohexadione. The 2-oxoglutarate-dependent dioxygenase asL3 further catalyzes the oxidative ring expansion to provide the first tropolone metabolite. The cytochrome P450 monooxygenase asR2 allows the synthesis of tropolone hemiacetal. In parallel, a previously unrecognised class of terpene cyclase, asR6, produces alpha-humulene from farnesylpyrophosphate (FPP). The putative Diels-Alderase asR5 probably catalyzes the formation of the tropolone-humulene skeleton by linking humulene and the polyketide moiety. Oxidative-ring contractions catalyzed by asL4 and asL6 then processively remove carbon atoms from the polyketide to yield xenovulene A. The chain is Cytochrome P450 monooxygenase asR2 from Sarocladium schorii (Acremonium strictum (strain IMI 501407)).